A 287-amino-acid chain; its full sequence is Pantothenate synthetase (287 aa).

30 to 37 serves as a coordination point for ATP; the sequence is MGNLHDGH. Histidine 37 acts as the Proton donor in catalysis. Glutamine 61 serves as a coordination point for (R)-pantoate. Glutamine 61 serves as a coordination point for beta-alanine. 148–151 contacts ATP; sequence GQKD. Glutamine 154 is a binding site for (R)-pantoate. Residues isoleucine 177 and 185 to 188 contribute to the ATP site; that span reads LSSR.

The protein belongs to the pantothenate synthetase family. As to quaternary structure, homodimer.

The protein resides in the cytoplasm. It carries out the reaction (R)-pantoate + beta-alanine + ATP = (R)-pantothenate + AMP + diphosphate + H(+). Its pathway is cofactor biosynthesis; (R)-pantothenate biosynthesis; (R)-pantothenate from (R)-pantoate and beta-alanine: step 1/1. Its function is as follows. Catalyzes the condensation of pantoate with beta-alanine in an ATP-dependent reaction via a pantoyl-adenylate intermediate. The sequence is that of Pantothenate synthetase from Psychrobacter cryohalolentis (strain ATCC BAA-1226 / DSM 17306 / VKM B-2378 / K5).